Here is a 1124-residue protein sequence, read N- to C-terminus: Transient-receptor-potential-like protein (1124 aa).

Residues 1-24 (MGRKKKLPTGVSSGVSHASSAPKS) are disordered. The Cytoplasmic segment spans residues 1–340 (MGRKKKLPTG…GFRRKSIVDK (340 aa)). Positions 10–21 (GVSSGVSHASSA) are enriched in low complexity. ANK repeat units lie at residues 40–69 (LEEK…RHQH), 78–107 (LGRR…ETKD), and 152–181 (PDIT…AVPV). A helical membrane pass occupies residues 341 to 361 (VICIAQVAVLFPLYCLIYMCA). Residues 362 to 373 (PNCRTGQLMRKP) are Extracellular-facing. Residues 374–394 (FMKFLIHASSYLFFLFILILV) form a helical membrane-spanning segment. Topologically, residues 395–431 (SQRADDDFVRIFGTTRMKKELAEQELRQRGQTPSKLE) are cytoplasmic. Residues 432-452 (LIVVMYVIGFVWEEVQEIFAV) traverse the membrane as a helical segment. Residues 453–512 (GMKSYLRNMWNFIDFLRNSLYVSVMCLRAFAYIQQATEIARDPQMAYIPREKWHDFDPQL) lie on the Extracellular side of the membrane. The chain crosses the membrane as a helical span at residues 513–533 (IAEGLFAAANVFSALKLVHLF). Over 534-548 (SINPHLGPLQISLGR) the chain is Cytoplasmic. The helical transmembrane segment at 549–569 (MVIDIVKFFFIYTLVLFAFAC) threads the bilayer. The Extracellular segment spans residues 570-645 (GLNQLLWYFA…GIKSYTRFWG (76 aa)). Residues 646-666 (LLMFGSYSVINVIVLLNLLIA) traverse the membrane as a helical segment. Residues 667–1124 (MMSNSYAMID…TSPQRPKHRN (458 aa)) are Cytoplasmic-facing. 2 calmodulin-binding regions span residues 710 to 728 (SVKW…IDRQ) and 853 to 895 (IPSK…SQIG). Disordered stretches follow at residues 978–1013 (RAMA…GVSH) and 1031–1124 (LIAN…KHRN). Residues 1035-1063 (SAPSAPTAPPKKSAPTAPTPTYKPTTHAP) are compositionally biased toward low complexity. Basic and acidic residues-rich tracts occupy residues 1069–1081 (GNRE…DGVR) and 1090–1106 (HVVD…RDNV). Over residues 1107-1118 (SDISSIASTSPQ) the composition is skewed to polar residues.

It belongs to the transient receptor (TC 1.A.4) family. STrpC subfamily. Forms heteromultimers with Trpgamma and, to a lower extent, with trp. Interacts with Fkbp59 in vivo and is found in the inaD signaling complex. In terms of tissue distribution, expressed predominantly in the rhabdomeres of photoreceptor cells.

The protein resides in the membrane. It localises to the cell projection. It is found in the rhabdomere membrane. Functionally, a light-sensitive calcium channel that is required for inositide-mediated Ca(2+) entry in the retina during phospholipase C (PLC)-mediated phototransduction. Required for vision in the dark and in dim light. Binds calmodulin. Trp and trpl act together in the light response, although it is unclear whether as heteromultimers or distinct units. Also forms a functional cation channel with Trpgamma. Activated by fatty acids, metabolic stress, inositols and GTP-binding proteins. The chain is Transient-receptor-potential-like protein (trpl) from Drosophila melanogaster (Fruit fly).